We begin with the raw amino-acid sequence, 469 residues long: MNLIGPSHLQATDEFALSENLFGVLTEHAAGPLGQNLDLESYSPYNNVQFPQVQPQISSSSYYSNLGFYPQQPEDWYSPGLYELRRMPTESVYQGETEVSEMPVTKKPRMAASSAGRIKGDELCVVCGDRASGYHYNALTCEGCKGFFRRSITKNAVYKCKNGGNCVMDMYMRRKCQDCRLRKCREMGMLAECLLTEIQCKSKRLRKNVKQHADQTVNEDSEGRDLRQVTSTTKLCREKTELTVDQQTLLDYIMDSYSKQRMPQEITNKILKEEFSAEENFLILTEMATSHVQILVEFTKRLPGFQTLDHEDQIALLKGSAVEAMFLRSAEIFNKKLPAGHADLLEERIRKSGISDEYITPMFSFYKSVGELKMTQEEYALLTAIVILSPDRQYIKDREAVEKLQEPLLDVLQKLCKIYQPENPQHFACLLGRLTELRTFNHHHAEMLMSWRVNDHKFTPLLCEIWDVQ.

Residue K119 forms a Glycyl lysine isopeptide (Lys-Gly) (interchain with G-Cter in SUMO1) linkage. The segment at residues 121 to 196 (DELCVVCGDR…MGMLAECLLT (76 aa)) is a DNA-binding region (nuclear receptor). Residues 124 to 144 (CVVCGDRASGYHYNALTCEGC) form an NR C4-type zinc finger. Phosphoserine; by PKC/PRKCA is present on residues S132 and S151. Position 154 is an N6-acetyllysine; by EP300 (K154). The NR C4-type zinc finger occupies 160-184 (CKNGGNCVMDMYMRRKCQDCRLRKC). Position 203 is an N6-methyllysine; by SETD7 (K203). K210 is subject to N6-acetyllysine; by EP300. Positions 245-469 (DQQTLLDYIM…PLLCEIWDVQ (225 aa)) constitute an NR LBD domain. K272 participates in a covalent cross-link: Glycyl lysine isopeptide (Lys-Gly) (interchain with G-Cter in SUMO1). R328 provides a ligand contact to 3beta,7beta-dihydroxy-5beta-cholan-24-oate. Chenodeoxycholate-binding residues include R328, Y358, and Y366. Position 366 (Y366) interacts with 3beta,7beta-dihydroxy-5beta-cholan-24-oate. T439 bears the Phosphothreonine; by PKC/PRKCZ mark. Position 444 (H444) interacts with chenodeoxycholate.

Belongs to the nuclear hormone receptor family. NR1 subfamily. In terms of assembly, heterodimer with RXRA; the heterodimerization enhances the binding affinity for LXXLL motifs from coactivators. Binds DNA predominantly as a heterodimer with RXRA. After activation by agonist binding interacts with coactivators. Interacts with NCOA1, NCOA2, PPARGC1A, CARM1, SETD7, PRMT1, GPS2, SMARCA4 and MED1, EP300 and SMARCD1. Interacts with XRCC5 and XRCC6; decreasing NR1H4/FXR transactivation activity towards ABCB11/BSEP. Interacts with PAGR1 AND NCOA6; indicative for an association with an MLL2/MLL3 complex (ASCOM). Acetylated by EP300. Lys-210 as is the major acetylation site for EP300; the dynamicly regulated acetylation inhibits heterodimerization with RXRA and transactivation activity. Deacetylated by SIRT1. Post-translationally, methylation may increase transactivation of target genes. In terms of processing, phosphorylation by PKC/PRKCA increases transactivation activity by promoting association with PPARGC1A. Sumoylated upon ligand binding.

The protein localises to the nucleus. In terms of biological role, ligand-activated transcription factor. Receptor for bile acids (BAs) such as chenodeoxycholic acid (CDCA), lithocholic acid, deoxycholic acid (DCA) and allocholic acid (ACA). Plays a essential role in BA homeostasis through the regulation of genes involved in BA synthesis, conjugation and enterohepatic circulation. Also regulates lipid and glucose homeostasis and is involved innate immune response. The FXR-RXR heterodimer binds predominantly to farnesoid X receptor response elements (FXREs) containing two inverted repeats of the consensus sequence 5'-AGGTCA-3' in which the monomers are spaced by 1 nucleotide (IR-1) but also to tandem repeat DR1 sites with lower affinity, and can be activated by either FXR or RXR-specific ligands. It is proposed that monomeric nuclear receptors such as NR5A2/LRH-1 bound to coregulatory nuclear responsive element (NRE) halfsites located in close proximity to FXREs modulate transcriptional activity. In the liver activates transcription of the corepressor NR0B2 thereby indirectly inhibiting CYP7A1 and CYP8B1 (involved in BA synthesis) implicating at least in part histone demethylase KDM1A resulting in epigenomic repression, and SLC10A1/NTCP (involved in hepatic uptake of conjugated BAs). Activates transcription of the repressor MAFG (involved in regulation of BA synthesis). Activates transcription of SLC27A5/BACS and BAAT (involved in BA conjugation), ABCB11/BSEP (involved in bile salt export) by directly recruiting histone methyltransferase CARM1, and ABCC2/MRP2 (involved in secretion of conjugated BAs) and ABCB4 (involved in secretion of phosphatidylcholine in the small intestine). Activates transcription of SLC27A5/BACS and BAAT (involved in BA conjugation), ABCB11/BSEP (involved in bile salt export) by directly recruiting histone methyltransferase CARM1, and ABCC2/MRP2 (involved in secretion of conjugated BAs) and ABCB4 (involved in secretion of phosphatidylcholine in the small intestine). In the intestine activates FGF19 expression and secretion leading to hepatic CYP7A1 repression. The function also involves the coordinated induction of hepatic KLB/beta-klotho expression. Regulates transcription of liver UGT2B4 and SULT2A1 involved in BA detoxification; binding to the UGT2B4 promoter seems to imply a monomeric transactivation independent of RXRA. Modulates lipid homeostasis by activating liver NR0B2/SHP-mediated repression of SREBF1 (involved in de novo lipogenesis), expression of PLTP (involved in HDL formation), SCARB1 (involved in HDL hepatic uptake), APOE, APOC1, APOC4, PPARA (involved in beta-oxidation of fatty acids), VLDLR and SDC1 (involved in the hepatic uptake of LDL and IDL remnants), and inhibiting expression of MTTP (involved in VLDL assembly). Increases expression of APOC2 (promoting lipoprotein lipase activity implicated in triglyceride clearance). Transrepresses APOA1 involving a monomeric competition with NR2A1 for binding to a DR1 element. Also reduces triglyceride clearance by inhibiting expression of ANGPTL3 and APOC3 (both involved in inhibition of lipoprotein lipase). Involved in glucose homeostasis by modulating hepatic gluconeogenesis through activation of NR0B2/SHP-mediated repression of respective genes. Modulates glycogen synthesis (inducing phosphorylation of glycogen synthase kinase-3). Modulates glucose-stimulated insulin secretion and is involved in insulin resistance. Involved in intestinal innate immunity. Plays a role in protecting the distal small intestine against bacterial overgrowth and preservation of the epithelial barrier. Down-regulates inflammatory cytokine expression in several types of immune cells including macrophages and mononuclear cells. Mediates trans-repression of TLR4-induced cytokine expression; the function seems to require its sumoylation and prevents N-CoR nuclear receptor corepressor clearance from target genes such as IL1B and NOS2. Involved in the TLR9-mediated protective mechanism in intestinal inflammation. Plays an anti-inflammatory role in liver inflammation; proposed to inhibit pro-inflammatory (but not antiapoptotic) NF-kappa-B signaling. This chain is Bile acid receptor (Nr1h4), found in Rattus norvegicus (Rat).